The chain runs to 190 residues: Nascent polypeptide-associated complex subunit alpha (190 aa).

Disordered regions lie at residues 20–42 (FDSD…AERK) and 123–155 (SLQN…VDAK). A compositionally biased stretch (basic and acidic residues) spans 30–40 (HASDKVASRAE). The 66-residue stretch at 37 to 102 (SRAERKSRKA…AKAEDMSQLA (66 aa)) folds into the NAC-A/B domain. The segment covering 138–151 (EEEEDDDSPIDEEG) has biased composition (acidic residues). One can recognise a UBA domain in the interval 152-189 (VDAKDIDLVMQQVSCSRRKAVKALKESNGDLINAIMNA).

Belongs to the NAC-alpha family. Part of the nascent polypeptide-associated complex (NAC), consisting of EGD2 and EGD1. NAC associates with ribosomes via EGD1.

The protein resides in the cytoplasm. The protein localises to the nucleus. In terms of biological role, component of the nascent polypeptide-associated complex (NAC), a dynamic component of the ribosomal exit tunnel, protecting the emerging polypeptides from interaction with other cytoplasmic proteins to ensure appropriate nascent protein targeting. The NAC complex also promotes mitochondrial protein import by enhancing productive ribosome interactions with the outer mitochondrial membrane and blocks the inappropriate interaction of ribosomes translating non-secretory nascent polypeptides with translocation sites in the membrane of the endoplasmic reticulum. EGD2 may also be involved in transcription regulation. The polypeptide is Nascent polypeptide-associated complex subunit alpha (EGD2) (Mycosarcoma maydis (Corn smut fungus)).